A 109-amino-acid chain; its full sequence is Protein reprimo (109 aa).

2 N-linked (GlcNAc...) asparagine glycosylation sites follow: N7 and N18. A helical membrane pass occupies residues 56–76 (VVQIAVMCVLSLTVVFGIFFL). S98 bears the Phosphoserine mark.

This sequence belongs to the reprimo family.

It is found in the cytoplasm. The protein resides in the membrane. Its function is as follows. May be involved in the regulation of p53-dependent G2 arrest of the cell cycle. Seems to induce cell cycle arrest by inhibiting CDK1 activity and nuclear translocation of the CDC2 cyclin B1 complex. This is Protein reprimo (Rprm) from Rattus norvegicus (Rat).